The following is a 43-amino-acid chain: Cytochrome b559 subunit beta (43 aa).

The helical transmembrane segment at 18–34 (WLAIHGLAIPTVFFFGA) threads the bilayer. A heme-binding site is contributed by His22.

This sequence belongs to the PsbE/PsbF family. In terms of assembly, heterodimer of an alpha subunit and a beta subunit. PSII is composed of 1 copy each of membrane proteins PsbA, PsbB, PsbC, PsbD, PsbE, PsbF, PsbH, PsbI, PsbJ, PsbK, PsbL, PsbM, PsbT, PsbY, PsbZ, Psb30/Ycf12, at least 3 peripheral proteins of the oxygen-evolving complex and a large number of cofactors. It forms dimeric complexes. Heme b is required as a cofactor.

The protein localises to the plastid. It localises to the chloroplast thylakoid membrane. Functionally, this b-type cytochrome is tightly associated with the reaction center of photosystem II (PSII). PSII is a light-driven water:plastoquinone oxidoreductase that uses light energy to abstract electrons from H(2)O, generating O(2) and a proton gradient subsequently used for ATP formation. It consists of a core antenna complex that captures photons, and an electron transfer chain that converts photonic excitation into a charge separation. The chain is Cytochrome b559 subunit beta from Cyanidium caldarium (Red alga).